A 183-amino-acid polypeptide reads, in one-letter code: Translocon-associated protein subunit beta (183 aa).

The first 17 residues, 1-17, serve as a signal peptide directing secretion; it reads MRLLASVLLALFAVSHA. Residues 18 to 149 lie on the Lumenal side of the membrane; it reads EEGARLLASK…DRRFSPHFLD (132 aa). N88 and N104 each carry an N-linked (GlcNAc...) asparagine glycan. Residues 150-169 form a helical membrane-spanning segment; it reads WAAFGVMTLPSIGIPLLLWY. The Cytoplasmic segment spans residues 170–183; sequence SSKRKYDTPKSKKN.

The protein belongs to the TRAP-beta family. As to quaternary structure, heterotetramer of TRAP-alpha, TRAP-beta, TRAP-delta and TRAP-gamma. Interacts with STING1.

The protein localises to the endoplasmic reticulum membrane. Its function is as follows. TRAP proteins are part of a complex whose function is to bind calcium to the ER membrane and thereby regulate the retention of ER resident proteins. The sequence is that of Translocon-associated protein subunit beta (SSR2) from Canis lupus familiaris (Dog).